A 264-amino-acid chain; its full sequence is Expansin-B3 (264 aa).

An N-terminal signal peptide occupies residues 1 to 25 (MQLFPVMLATLCIVLQLLIGSSALA). One can recognise an Expansin-like EG45 domain in the interval 54–162 (GGACGYGTLV…RRTACKYRGK (109 aa)). 3 cysteine pairs are disulfide-bonded: Cys-57/Cys-86, Cys-89/Cys-157, and Cys-94/Cys-100. Residues 175-256 (FWLSLLVEFE…NWAPKATYSS (82 aa)) enclose the Expansin-like CBD domain.

The protein belongs to the expansin family. Expansin B subfamily.

Its subcellular location is the secreted. It is found in the cell wall. The protein localises to the membrane. Its function is as follows. May cause loosening and extension of plant cell walls by disrupting non-covalent bonding between cellulose microfibrils and matrix glucans. No enzymatic activity has been found. The protein is Expansin-B3 (EXPB3) of Arabidopsis thaliana (Mouse-ear cress).